The following is a 365-amino-acid chain: IgG receptor FcRn large subunit p51 (365 aa).

The first 23 residues, 1–23 (MGVPRPQPWALGLLLFLLPGSLG), serve as a signal peptide directing secretion. The interval 24–110 (AESHLSLLYH…AFKALGGKGP (87 aa)) is alpha-1. Residues 24 to 297 (AESHLSLLYH…VELESPAKSS (274 aa)) lie on the Extracellular side of the membrane. The alpha-2 stretch occupies residues 111-200 (YTLQGLLGCE…ERGRGNLEWK (90 aa)). Cystine bridges form between cysteine 119–cysteine 182 and cysteine 221–cysteine 275. N-linked (GlcNAc...) asparagine glycosylation occurs at asparagine 125. An alpha-3 region spans residues 201 to 290 (EPPSMRLKAR…GLAQPLRVEL (90 aa)). Residues 202–289 (PPSMRLKARP…AGLAQPLRVE (88 aa)) form the Ig-like C1-type domain. The tract at residues 291 to 297 (ESPAKSS) is connecting peptide. A helical transmembrane segment spans residues 298-321 (VLVVGIVIGVLLLTAAAVGGALLW). The Cytoplasmic portion of the chain corresponds to 322 to 365 (RRMRSGLPAPWISLRGDDTGVLLPTPGEAQDADLKDVNVIPATA). Serine 334 is modified (phosphoserine).

Belongs to the immunoglobulin superfamily. FcRn complex consists of two subunits: p51, and p14 which is equivalent to beta-2-microglobulin. It forms an MHC class I-like heterodimer. Interacts with albumin/ALB; this interaction regulates ALB homeostasis. As to quaternary structure, (Microbial infection) Interacts with Echovirus 6, Echovirus 11 and Echovirus 30 capsid protein VP1. As to expression, expressed in full-term placenta, heart, lung, liver, muscle, kidney, pancreas, and both fetal and adult small intestine.

It localises to the cell membrane. It is found in the endosome membrane. In terms of biological role, cell surface receptor that transfers passive humoral immunity from the mother to the newborn. Binds to the Fc region of monomeric immunoglobulin gamma and mediates its selective uptake from milk. IgG in the milk is bound at the apical surface of the intestinal epithelium. The resultant FcRn-IgG complexes are transcytosed across the intestinal epithelium and IgG is released from FcRn into blood or tissue fluids. Throughout life, contributes to effective humoral immunity by recycling IgG and extending its half-life in the circulation. Mechanistically, monomeric IgG binding to FcRn in acidic endosomes of endothelial and hematopoietic cells recycles IgG to the cell surface where it is released into the circulation. In addition of IgG, regulates homeostasis of the other most abundant circulating protein albumin/ALB. Its function is as follows. (Microbial infection) Acts as an uncoating receptor for a panel of echoviruses including Echovirus 5, 6, 7, 9, 11, 13, 25 and 29. In Homo sapiens (Human), this protein is IgG receptor FcRn large subunit p51 (FCGRT).